Reading from the N-terminus, the 405-residue chain is Insertion element IS110 uncharacterized 43.6 kDa protein (405 aa).

The protein is Insertion element IS110 uncharacterized 43.6 kDa protein of Streptomyces coelicolor (strain ATCC BAA-471 / A3(2) / M145).